The primary structure comprises 168 residues: Dual-action ribosomal maturation protein DarP (168 aa).

Belongs to the DarP family.

It localises to the cytoplasm. Functionally, member of a network of 50S ribosomal subunit biogenesis factors which assembles along the 30S-50S interface, preventing incorrect 23S rRNA structures from forming. Promotes peptidyl transferase center (PTC) maturation. This chain is Dual-action ribosomal maturation protein DarP, found in Neisseria meningitidis serogroup B (strain ATCC BAA-335 / MC58).